A 789-amino-acid chain; its full sequence is Subtilisin-like protease Glyma18g48580 (789 aa).

The signal sequence occupies residues 1 to 27 (MGSSIFCLHLILSSFFLFTFLLAAVNG). Residues 32 to 116 (YIVYMGAHSH…VFLSKEHKLH (85 aa)) enclose the Inhibitor I9 domain. The Peptidase S8 domain maps to 120–644 (SWEFLGLHRR…SGHVRPDLAI (525 aa)). Catalysis depends on charge relay system residues D150 and H224. The PA domain occupies 401 to 489 (TFRDAQLCRR…RPHGVKTTAI (89 aa)). The disordered stretch occupies residues 468-499 (STVNTPPRRAKSRPHGVKTTAIGDEDDPLKTG). S576 functions as the Charge relay system in the catalytic mechanism.

It belongs to the peptidase S8 family. Expressed in roots, stems, flowers and young leaves. Barely detectable in matures leaves.

The protein localises to the secreted. In terms of biological role, produces a rapid alkalinization of the cellular media and the induction of defense-related genes, including chitinase 1b, chalcone synthase and CYP93A1. The receptor for GmSubPep is probably different from the receptor(s) for GmPep890 and GmPep914. The polypeptide is Subtilisin-like protease Glyma18g48580 (Glycine max (Soybean)).